Consider the following 143-residue polypeptide: Large ribosomal subunit protein uL11 (143 aa).

Belongs to the universal ribosomal protein uL11 family. Part of the ribosomal stalk of the 50S ribosomal subunit. Interacts with L10 and the large rRNA to form the base of the stalk. L10 forms an elongated spine to which 2 L12 dimers bind in a sequential fashion forming a pentameric L10(L12)2(L12)2 complex. One or more lysine residues are methylated.

Forms part of the ribosomal stalk which helps the ribosome interact with GTP-bound translation factors. This is Large ribosomal subunit protein uL11 from Agrobacterium fabrum (strain C58 / ATCC 33970) (Agrobacterium tumefaciens (strain C58)).